Here is a 411-residue protein sequence, read N- to C-terminus: MSLETFRESKAYKWTSKVISFLIGQWFFIFLGVFIALAHSYPEFAKQGGTIRAEYSIGYGAVAVIFLISGLSMSTKQLLVNVANWRAHFTVLSMSFLVTSAIIYGIASGIKASHNGQIDDWLLIGLIVTHACPTTVSSNVVMTKQAHGNDILTLCEVFIGNVLGAFITPALLQMYMRGTWEIGNPSHQTQGDSTVQELYAHTMKQLGLSVFVPLFVGQVVQNIFPKQTKWCLTTFKLNKVGSFMLLLIMFQSFSTAFAQHAFTSVSHASIIFLVFFNIGIYLFFTVLTFFYSRPFWILRVFKEEPNESSSKLYRYSYAFFRPFYYNRKDTVAVMLCGPAKTAALGVSLVSSQYGSHNPKLGIILVPLVLYQAEQVMTANVLVSFMRKWIHAEDKVPEDEETSVGSDNDPKK.

Topologically, residues 1–17 (MSLETFRESKAYKWTSK) are cytoplasmic. A helical transmembrane segment spans residues 18 to 38 (VISFLIGQWFFIFLGVFIALA). The Extracellular segment spans residues 39–52 (HSYPEFAKQGGTIR). The chain crosses the membrane as a helical span at residues 53 to 73 (AEYSIGYGAVAVIFLISGLSM). Topologically, residues 74–89 (STKQLLVNVANWRAHF) are cytoplasmic. The helical transmembrane segment at 90–110 (TVLSMSFLVTSAIIYGIASGI) threads the bilayer. The Extracellular portion of the chain corresponds to 111-120 (KASHNGQIDD). A helical membrane pass occupies residues 121–141 (WLLIGLIVTHACPTTVSSNVV). Over 142-150 (MTKQAHGND) the chain is Cytoplasmic. The helical transmembrane segment at 151 to 171 (ILTLCEVFIGNVLGAFITPAL) threads the bilayer. At 172–204 (LQMYMRGTWEIGNPSHQTQGDSTVQELYAHTMK) the chain is on the extracellular side. The chain crosses the membrane as a helical span at residues 205–225 (QLGLSVFVPLFVGQVVQNIFP). Residues 226–242 (KQTKWCLTTFKLNKVGS) are Cytoplasmic-facing. The helical transmembrane segment at 243–263 (FMLLLIMFQSFSTAFAQHAFT) threads the bilayer. The Extracellular portion of the chain corresponds to 264-269 (SVSHAS). Residues 270–290 (IIFLVFFNIGIYLFFTVLTFF) form a helical membrane-spanning segment. The Cytoplasmic segment spans residues 291–329 (YSRPFWILRVFKEEPNESSSKLYRYSYAFFRPFYYNRKD). A helical membrane pass occupies residues 330–350 (TVAVMLCGPAKTAALGVSLVS). Residues 351-361 (SQYGSHNPKLG) lie on the Extracellular side of the membrane. A helical transmembrane segment spans residues 362 to 382 (IILVPLVLYQAEQVMTANVLV). Over 383-411 (SFMRKWIHAEDKVPEDEETSVGSDNDPKK) the chain is Cytoplasmic.

This sequence belongs to the bile acid:sodium symporter (BASS) (TC 2.A.28) family.

It localises to the cell membrane. Its subcellular location is the bud neck. Functionally, solute carrier protein that negatively regulates the cytosolic homeostasis in response to high levels of extracellular calcium. The chain is Solute carrier RCH1 from Candida albicans (strain SC5314 / ATCC MYA-2876) (Yeast).